Reading from the N-terminus, the 311-residue chain is Glycerol-3-phosphate dehydrogenase [NAD(P)+] (311 aa).

Positions 12, 31, 32, and 96 each coordinate NADPH. Residues Lys96, Gly124, and Ser126 each coordinate sn-glycerol 3-phosphate. Ala128 lines the NADPH pocket. Lys178, Asp231, Ser241, Arg242, and Asn243 together coordinate sn-glycerol 3-phosphate. Catalysis depends on Lys178, which acts as the Proton acceptor. Arg242 is an NADPH binding site. NADPH-binding residues include Val266 and Glu268.

It belongs to the NAD-dependent glycerol-3-phosphate dehydrogenase family.

It localises to the cytoplasm. The catalysed reaction is sn-glycerol 3-phosphate + NAD(+) = dihydroxyacetone phosphate + NADH + H(+). It carries out the reaction sn-glycerol 3-phosphate + NADP(+) = dihydroxyacetone phosphate + NADPH + H(+). Its pathway is membrane lipid metabolism; glycerophospholipid metabolism. Catalyzes the reduction of the glycolytic intermediate dihydroxyacetone phosphate (DHAP) to sn-glycerol 3-phosphate (G3P), the key precursor for phospholipid synthesis. The sequence is that of Glycerol-3-phosphate dehydrogenase [NAD(P)+] from Helicobacter hepaticus (strain ATCC 51449 / 3B1).